A 200-amino-acid polypeptide reads, in one-letter code: Imidazoleglycerol-phosphate dehydratase (200 aa).

This sequence belongs to the imidazoleglycerol-phosphate dehydratase family.

Its subcellular location is the cytoplasm. The catalysed reaction is D-erythro-1-(imidazol-4-yl)glycerol 3-phosphate = 3-(imidazol-4-yl)-2-oxopropyl phosphate + H2O. Its pathway is amino-acid biosynthesis; L-histidine biosynthesis; L-histidine from 5-phospho-alpha-D-ribose 1-diphosphate: step 6/9. The polypeptide is Imidazoleglycerol-phosphate dehydratase (Chlorobium phaeobacteroides (strain DSM 266 / SMG 266 / 2430)).